Reading from the N-terminus, the 278-residue chain is Probable F-box protein At1g14315 (278 aa).

One can recognise an F-box domain in the interval 1 to 43 (MQLLPHDTVEDILERVPVKSLLRFKSACKQWKLTIESQYFQAK).

The chain is Probable F-box protein At1g14315 from Arabidopsis thaliana (Mouse-ear cress).